A 61-amino-acid polypeptide reads, in one-letter code: Ferredoxin-2 (61 aa).

4Fe-4S ferredoxin-type domains lie at 2 to 27 (HRIT…SAGD) and 28 to 61 (EIYI…IIKV). [4Fe-4S] cluster-binding residues include Cys8, Cys11, Cys14, Cys18, Cys37, Cys40, Cys49, and Cys53.

[4Fe-4S] cluster serves as cofactor.

Ferredoxins are iron-sulfur proteins that transfer electrons in a wide variety of metabolic reactions. In Chlorobium limicola, this protein is Ferredoxin-2.